The sequence spans 986 residues: Translation initiation factor IF-2 (986 aa).

A disordered region spans residues 47 to 388 (SAPAQTPHKE…RSKGRKGKYE (342 aa)). Basic and acidic residues predominate over residues 53–64 (PHKEVSQEEVRV). Residues 78 to 94 (PEAASAEAASAPAAQEE) show a composition bias toward low complexity. Residues 95 to 113 (APQKAEPEKVEAEKAEAPK) show a composition bias toward basic and acidic residues. 2 stretches are compositionally biased toward low complexity: residues 127 to 141 (EAAP…PAEA) and 153 to 214 (APVA…QAPA). 2 stretches are compositionally biased toward basic and acidic residues: residues 215 to 225 (KAEEQEPEKAT) and 268 to 278 (GVERPGTERPA). The span at 286-300 (PAGAPGRPGERPTTG) shows a compositional bias: low complexity. Residues 358–374 (GKKDSFKDILDKRERVF) show a composition bias toward basic and acidic residues. In terms of domain architecture, tr-type G spans 486–653 (KRPPVVTIMG…MVLLQADVLE (168 aa)). A G1 region spans residues 495 to 502 (GHVDHGKT). 495 to 502 (GHVDHGKT) contributes to the GTP binding site. The segment at 520-524 (GITQH) is G2. The interval 541–544 (DTPG) is G3. GTP is bound by residues 541 to 545 (DTPGH) and 595 to 598 (NKID). A G4 region spans residues 595–598 (NKID). Residues 631 to 633 (SAK) are G5.

This sequence belongs to the TRAFAC class translation factor GTPase superfamily. Classic translation factor GTPase family. IF-2 subfamily.

The protein localises to the cytoplasm. Functionally, one of the essential components for the initiation of protein synthesis. Protects formylmethionyl-tRNA from spontaneous hydrolysis and promotes its binding to the 30S ribosomal subunits. Also involved in the hydrolysis of GTP during the formation of the 70S ribosomal complex. In Citrifermentans bemidjiense (strain ATCC BAA-1014 / DSM 16622 / JCM 12645 / Bem) (Geobacter bemidjiensis), this protein is Translation initiation factor IF-2.